A 260-amino-acid chain; its full sequence is Snake venom serine protease salmobin (260 aa).

The first 18 residues, 1–18 (MVLIKVLANHLILQLSYA), serve as a signal peptide directing secretion. The propeptide occupies 19-24 (QKSSEL). Positions 25–251 (VIGGDECNIN…YTDWIQSIIA (227 aa)) constitute a Peptidase S1 domain. 6 disulfides stabilise this stretch: cysteine 31–cysteine 165, cysteine 52–cysteine 68, cysteine 102–cysteine 258, cysteine 144–cysteine 212, cysteine 176–cysteine 191, and cysteine 202–cysteine 227. Histidine 67 acts as the Charge relay system in catalysis. A glycan (N-linked (GlcNAc...) asparagine) is linked at asparagine 105. The active-site Charge relay system is the aspartate 112. Residues asparagine 123 and asparagine 156 are each glycosylated (N-linked (GlcNAc...) asparagine). Serine 206 functions as the Charge relay system in the catalytic mechanism.

The protein belongs to the peptidase S1 family. Snake venom subfamily. Monomer. As to expression, expressed by the venom gland.

Its subcellular location is the secreted. Its function is as follows. Snake venom serine protease that may act in the hemostasis system of the prey. The protein is Snake venom serine protease salmobin of Gloydius halys (Chinese water mocassin).